Reading from the N-terminus, the 523-residue chain is Cyclic di-GMP binding protein BcsE (523 aa).

It belongs to the BcsE family.

In terms of biological role, required for cellulose biosynthesis. May have protease activity, but BcsA is not targeted. Binds bis-(3'-5') cyclic diguanylic acid (c-di-GMP). This Salmonella typhimurium (strain LT2 / SGSC1412 / ATCC 700720) protein is Cyclic di-GMP binding protein BcsE.